The primary structure comprises 453 residues: Tubulin alpha-1 chain (453 aa).

Positions 11, 71, 144, 145, 179, 206, and 228 each coordinate GTP. Residue glutamate 71 coordinates Mg(2+). Residue glutamate 254 is part of the active site. Positions 433–453 (EEVGAETADGDGEEEEFGEEY) are disordered.

Belongs to the tubulin family. Dimer of alpha and beta chains. A typical microtubule is a hollow water-filled tube with an outer diameter of 25 nm and an inner diameter of 15 nM. Alpha-beta heterodimers associate head-to-tail to form protofilaments running lengthwise along the microtubule wall with the beta-tubulin subunit facing the microtubule plus end conferring a structural polarity. Microtubules usually have 13 protofilaments but different protofilament numbers can be found in some organisms and specialized cells. It depends on Mg(2+) as a cofactor. Post-translationally, undergoes a tyrosination/detyrosination cycle, the cyclic removal and re-addition of a C-terminal tyrosine residue by the enzymes tubulin tyrosine carboxypeptidase (TTCP) and tubulin tyrosine ligase (TTL), respectively.

It is found in the cytoplasm. The protein localises to the cytoskeleton. It catalyses the reaction GTP + H2O = GDP + phosphate + H(+). Its function is as follows. Tubulin is the major constituent of microtubules, a cylinder consisting of laterally associated linear protofilaments composed of alpha- and beta-tubulin heterodimers. Microtubules grow by the addition of GTP-tubulin dimers to the microtubule end, where a stabilizing cap forms. Below the cap, tubulin dimers are in GDP-bound state, owing to GTPase activity of alpha-tubulin. The chain is Tubulin alpha-1 chain (TUBA1) from Pelvetia fastigiata (Brown alga).